We begin with the raw amino-acid sequence, 430 residues long: Probable sugar isomerase mlr5709 (430 aa).

Mn(2+)-binding residues include His257, Asp289, and Asp291.

Belongs to the rhamnose isomerase family. The cofactor is Mn(2+).

The polypeptide is Probable sugar isomerase mlr5709 (Mesorhizobium japonicum (strain LMG 29417 / CECT 9101 / MAFF 303099) (Mesorhizobium loti (strain MAFF 303099))).